A 169-amino-acid chain; its full sequence is Large ribosomal subunit protein uL10 (169 aa).

The protein belongs to the universal ribosomal protein uL10 family. As to quaternary structure, part of the ribosomal stalk of the 50S ribosomal subunit. The N-terminus interacts with L11 and the large rRNA to form the base of the stalk. The C-terminus forms an elongated spine to which L12 dimers bind in a sequential fashion forming a multimeric L10(L12)X complex.

In terms of biological role, forms part of the ribosomal stalk, playing a central role in the interaction of the ribosome with GTP-bound translation factors. The protein is Large ribosomal subunit protein uL10 of Lactobacillus delbrueckii subsp. bulgaricus (strain ATCC 11842 / DSM 20081 / BCRC 10696 / JCM 1002 / NBRC 13953 / NCIMB 11778 / NCTC 12712 / WDCM 00102 / Lb 14).